Consider the following 2067-residue polypeptide: Dedicator of cytokinesis protein 11 (2067 aa).

Residues 162–269 (GVMKQGWLQK…WVNTIKQALL (108 aa)) form the PH domain. The segment at 274-302 (DRRNGSETSEGSLDDDSSSQGKPESITES) is disordered. A compositionally biased stretch (polar residues) spans 291-302 (SSQGKPESITES). One can recognise a C2 DOCK-type domain in the interval 643–820 (NNHLYIYPQQ…PLFKVRAYVA (178 aa)). Positions 1224–1267 (SSTIVDKEPSGSVTQNGLSRRGESRGSMYGDPGTPDINELHRRG) are disordered. In terms of domain architecture, DOCKER spans 1614–2040 (RSYASTPELR…LSEIIHEQIF (427 aa)).

This sequence belongs to the DOCK family.

Guanine nucleotide-exchange factor (GEF) that activates CDC42 by exchanging bound GDP for free GTP. In Danio rerio (Zebrafish), this protein is Dedicator of cytokinesis protein 11.